A 1023-amino-acid polypeptide reads, in one-letter code: Probable histidine kinase 3 (1023 aa).

Topologically, residues 1-80 are cytoplasmic; that stretch reads MDEMSCGGGG…RGWRVVRETW (80 aa). Residues 81 to 101 form a helical membrane-spanning segment; the sequence is WWVLLLWILAGSLGSFYLFLF. Topologically, residues 102–387 are extracellular; the sequence is MNAQSLDKRR…CRFEKKPPWP (286 aa). Residues 151-352 enclose the CHASE domain; sequence TPSAIDQMTF…TNESPISMYG (202 aa). The helical transmembrane segment at 388-408 threads the bilayer; the sequence is WLAITSSFGTLVIALLTGHIF. The Cytoplasmic segment spans residues 409–1023; that stretch reads QATVHRIAKV…RFFQNHDQVE (615 aa). The Histidine kinase domain occupies 445–715; sequence TVSHEIRTPM…TFTFTAVLMR (271 aa). The residue at position 448 (His-448) is a Phosphohistidine; by autocatalysis. Response regulatory domains are found at residues 732-854 and 880-1016; these read NALV…RRAL and QIIV…ARFF. The residue at position 783 (Asp-783) is a 4-aspartylphosphate. Residues 812–831 form a disordered region; the sequence is LFLLGSSASSPKGGSDTSRE. A compositionally biased stretch (polar residues) spans 817 to 827; it reads SSASSPKGGSD. Asp-930 carries the 4-aspartylphosphate modification.

Post-translationally, activation probably requires a transfer of a phosphate group between a His in the transmitter domain and an Asp of the receiver domain.

It localises to the cell membrane. It carries out the reaction ATP + protein L-histidine = ADP + protein N-phospho-L-histidine.. Functionally, cytokinin receptor related to bacterial two-component regulators. Functions as a histidine kinase and transmits the stress signal to a downstream MAPK cascade. In Oryza sativa subsp. indica (Rice), this protein is Probable histidine kinase 3.